Consider the following 285-residue polypeptide: Energy-coupling factor transporter ATP-binding protein EcfA2 (285 aa).

One can recognise an ABC transporter domain in the interval Ile-3–Leu-245. Residue Gly-40–Ser-47 coordinates ATP. Glu-171 functions as the Proton acceptor in the catalytic mechanism.

This sequence belongs to the ABC transporter superfamily. Energy-coupling factor EcfA family. In terms of assembly, forms a stable energy-coupling factor (ECF) transporter complex probably composed of 2 membrane-embedded substrate-binding proteins (S component), 2 ATP-binding proteins (A component) and 2 transmembrane proteins (T component). This complex interacts with a number of substrate-specific components, including FolT, PanT and RibU for 5-formyltetrahydrofolate, pantothenate and riboflavin respectively.

Its subcellular location is the cell membrane. Its function is as follows. ATP-binding (A) component of a common energy-coupling factor (ECF) ABC-transporter complex. Unlike classic ABC transporters this ECF transporter provides the energy necessary to transport a number of different substrates including 5-formyltetrahydrofolate, pantothenate and riboflavin. Expression of the complex plus FolT in E.coli allows 5-formyltetrahydrofolate uptake; 5-formyltetrahydrofolate is not taken up in the absence of FolT or the EcfA1A2T complex. The sequence is that of Energy-coupling factor transporter ATP-binding protein EcfA2 from Leuconostoc mesenteroides subsp. mesenteroides (strain ATCC 8293 / DSM 20343 / BCRC 11652 / CCM 1803 / JCM 6124 / NCDO 523 / NBRC 100496 / NCIMB 8023 / NCTC 12954 / NRRL B-1118 / 37Y).